The primary structure comprises 485 residues: Zinc finger protein 639 (485 aa).

The segment covering 1-14 has biased composition (basic residues); sequence MNEYPKKRKRKTLH. Residues 1-20 are disordered; that stretch reads MNEYPKKRKRKTLHPSRYSD. Residue Ser60 is modified to Phosphoserine. Lys76 participates in a covalent cross-link: Glycyl lysine isopeptide (Lys-Gly) (interchain with G-Cter in SUMO2). Ser88 is modified (phosphoserine). Residues Lys177, Lys181, and Lys226 each participate in a glycyl lysine isopeptide (Lys-Gly) (interchain with G-Cter in SUMO2) cross-link. C2H2-type zinc fingers lie at residues 204–227, 233–255, 260–283, 289–311, 374–397, 403–425, 431–454, and 460–482; these read YKCE…ILKH, NVCR…AKLH, YICK…ADTH, YWCE…FQEH, FVCQ…AIEH, HVCD…LNSH, YLCQ…DFKH, and HKCS…LPVH. An interaction with CTNNA2 region spans residues 371–455; sequence KNFFVCQVCG…LKIHLDFKHS (85 aa).

This sequence belongs to the krueppel C2H2-type zinc-finger protein family. Interacts with CTNNA2.

It localises to the nucleus. In terms of biological role, binds DNA and may function as a transcriptional repressor. This Bos taurus (Bovine) protein is Zinc finger protein 639 (ZNF639).